We begin with the raw amino-acid sequence, 218 residues long: Octanoyltransferase (218 aa).

Residues 31 to 206 (EETPDEVWLV…ELVNLLGYEQ (176 aa)) enclose the BPL/LPL catalytic domain. Residues 70 to 77 (RGGQVTYH), 137 to 139 (SLG), and 150 to 152 (GLA) each bind substrate. Cysteine 168 acts as the Acyl-thioester intermediate in catalysis.

Belongs to the LipB family.

Its subcellular location is the cytoplasm. The enzyme catalyses octanoyl-[ACP] + L-lysyl-[protein] = N(6)-octanoyl-L-lysyl-[protein] + holo-[ACP] + H(+). It functions in the pathway protein modification; protein lipoylation via endogenous pathway; protein N(6)-(lipoyl)lysine from octanoyl-[acyl-carrier-protein]: step 1/2. Functionally, catalyzes the transfer of endogenously produced octanoic acid from octanoyl-acyl-carrier-protein onto the lipoyl domains of lipoate-dependent enzymes. Lipoyl-ACP can also act as a substrate although octanoyl-ACP is likely to be the physiological substrate. This Vibrio vulnificus (strain CMCP6) protein is Octanoyltransferase.